We begin with the raw amino-acid sequence, 776 residues long: Angiomotin-like protein 2 (776 aa).

Residues 41-88 form a disordered region; it reads GGAGAGGTGSPQASAEILAPEDTQVLQQATRQEPQGQEHQGGESHLAE. Residues 101–307 are required for interaction with CDH5; it reads GEELPTYEEA…STQTSSAPSG (207 aa). Tyrosine 107 bears the Phosphotyrosine mark. 3 disordered regions span residues 119 to 142, 169 to 215, and 283 to 309; these read AQQA…GHRS, RNGA…QYPH, and GPLG…SGSA. Residues 177-192 show a composition bias toward polar residues; sequence HMSSSHSFPQLARNQQ. The span at 196–213 shows a compositional bias: pro residues; the sequence is PRGPPAEGPEPRGPPPQY. The tract at residues 220-307 is required for interaction with CDH1; that stretch reads HETATAVTDP…STQTSSAPSG (88 aa). Residues 297–306 are compositionally biased toward polar residues; it reads ASTQTSSAPS. Coiled coils occupy residues 314–509 and 543–570; these read METL…LELR and ALRL…WEQK. Residues lysine 347 and lysine 408 each participate in a glycyl lysine isopeptide (Lys-Gly) (interchain with G-Cter in ubiquitin) cross-link. Disordered regions lie at residues 591–620 and 677–743; these read QRDT…GHRH and TQGW…LDPD. A compositionally biased stretch (polar residues) spans 678–687; that stretch reads QGWQSLSSSE. Phosphoserine occurs at positions 756 and 759. The PDZ-binding signature appears at 773–776; that stretch reads EILI.

This sequence belongs to the angiomotin family. Part of a complex composed of AMOTL2, MAGI1 and CDH5, within the complex AMOTL2 acts as a scaffold protein for the interaction of MAGI1 with CDH5. The complex is required for coupling actin fibers to cell junctions in endothelial cells. Within the complex AMOTL2 (via its N-terminus) interacts with CDH5. Interacts (via N-terminus) with MAGI1. Interacts (via N-terminus) with ACTB; the interaction facilitates binding of cell junction complexes to actin fibers in endothelial cells. Interacts with CDH1; the interaction may facilitate binding of radial actin fibers to cell junction complexes. Interacts with SRC. Interacts with YAP1; the interaction is required for ubiquitination of AMOTL2 and localization of YAP1 to tight junctions. Interacts with WWP1; the interaction facilitates WWP1 interaction with the Crumbs complex and subsequent WWP1 translocation to the plasma membrane. WPP1 interaction with the Crumbs complex promotes WPP1 monoubiquitination of AMOTL2 which subsequently activates the Hippo signaling pathway. When ubiquitinated interacts with LATS2 (via UBA domain); the interaction promotes LATS2 phosphorylation of YAP1. Interacts (via PPXY motif) with WWTR1/TAZ (via WW domain); the interaction promotes WWTR1/TAZ localization to the cytoplasm and thereby inhibition of its transcriptional properties. Interacts with PHLDB2; interaction may facilitate PHLDB2 localization to the myotube podosome cortex that surrounds the core. Monoubiquitinated at Lys-347 and Lys-408 by Crumbs complex-bound WWP1. De-ubiquitinated at Lys-347 and Lys-408 by USP9X; the interaction may be promoted by cell contact inhibition. Deubiquitination of AMOTL2 negatively regulates Hippo signaling activation. In terms of processing, phosphorylation at Tyr-107 is necessary for efficient binding to SRC and synergistically functioning with SRC to activate the downstream MAPK pathway.

It localises to the recycling endosome. Its subcellular location is the cytoplasm. It is found in the cell projection. The protein resides in the podosome. The protein localises to the cell junction. Functionally, regulates the translocation of phosphorylated SRC to peripheral cell-matrix adhesion sites. Required for proper architecture of actin filaments. Plays a role in coupling actin fibers to cell junctions in endothelial cells and is therefore required for correct endothelial cell morphology via facilitating transcellular transmission of mechanical force resulting in endothelial cell elongation. Required for the anchoring of radial actin fibers to CDH1 junction complexes at the cell membrane which facilitates organization of radial actin fiber structure and cellular response to contractile forces. This contributes to maintenance of cell area, size, shape, epithelial sheet organization and trophectoderm cell properties that facilitate blastocyst zona hatching. Inhibits the Wnt/beta-catenin signaling pathway, probably by recruiting CTNNB1 to recycling endosomes and hence preventing its translocation to the nucleus. Participates in angiogenesis. Activates the Hippo signaling pathway in response to cell contact inhibition via interaction with and ubiquitination by Crumbs complex-bound WWP1. Ubiquitinated AMOTL2 then interacts with LATS2 which in turn phosphorylates YAP1, excluding it from the nucleus and localizing it to the cytoplasm and tight junctions, therefore ultimately repressing YAP1-driven transcription of target genes. Acts to inhibit WWTR1/TAZ transcriptional coactivator activity via sequestering WWTR1/TAZ in the cytoplasm and at tight junctions. Regulates the size and protein composition of the podosome cortex and core at myofibril neuromuscular junctions. Selectively promotes FGF-induced MAPK activation through SRC. May play a role in the polarity, proliferation and migration of endothelial cells. This chain is Angiomotin-like protein 2, found in Canis lupus familiaris (Dog).